The sequence spans 324 residues: Aquaporin-4 (324 aa).

The Cytoplasmic segment spans residues 1 to 36; it reads MSDRPAARPWGKCGSLCRREEIMVAFKGVWTQAFWK. S-palmitoyl cysteine attachment occurs at residues Cys-13 and Cys-17. A helical membrane pass occupies residues 37–57; the sequence is AVTAEFLAMLIFVLLSLGSTI. Residues 58–69 are Extracellular-facing; the sequence is NWGGKENPLPVD. A helical membrane pass occupies residues 70-89; the sequence is MVLISLCFGLSIATMVQCFG. The Cytoplasmic portion of the chain corresponds to 90–93; sequence HISG. Residues 94-101 constitute an intramembrane region (discontinuously helical); it reads GHINPAVT. The short motif at 97 to 99 is the NPA 1 element; sequence NPA. Topologically, residues 102–115 are cytoplasmic; the sequence is VAMVCTRKISIAKS. Ser-111 is modified (phosphoserine; by PKG). A helical transmembrane segment spans residues 116–136; the sequence is VFYIAAQCLGAIIGAGILYLV. Residues 137 to 155 lie on the Extracellular side of the membrane; that stretch reads TPPSVVGGLGVTTVHGNLT. Asn-153 carries an N-linked (GlcNAc...) asparagine glycan. The chain crosses the membrane as a helical span at residues 156 to 176; sequence AGHGLLVELIITFQLVFTIFA. Over 177–184 the chain is Cytoplasmic; it reads SCDSKRTD. Position 180 is a phosphoserine; by PKC (Ser-180). The helical transmembrane segment at 185–205 threads the bilayer; it reads VTGSIALAIGFSVAIGHLFAI. A glycan (N-linked (GlcNAc...) asparagine) is linked at Asn-206. At 206–208 the chain is on the extracellular side; the sequence is NYT. The discontinuously helical intramembrane region spans 209 to 222; it reads GASMNPARSFGPAV. The NPA 2 motif lies at 213 to 215; the sequence is NPA. The Extracellular segment spans residues 223 to 231; that stretch reads IMGNWENHW. A helical transmembrane segment spans residues 232–252; that stretch reads IYWVGPIIGAVLAGGLYEYVF. At 253–324 the chain is on the cytoplasmic side; that stretch reads CPDVELKRRF…PSGEIAQTQH (72 aa). 2 positions are modified to phosphoserine: Ser-276 and Ser-285. Position 289 is a phosphothreonine (Thr-289). Basic and acidic residues predominate over residues 305–316; that stretch reads DRGDEKKGKDPS. A disordered region spans residues 305–324; sequence DRGDEKKGKDPSGEIAQTQH.

It belongs to the MIP/aquaporin (TC 1.A.8) family. Homotetramer. The tetramers can form oligomeric arrays in membranes. The size of the oligomers differs between tissues and is smaller in skeletal muscle than in brain. Interaction between AQP4 oligomeric arrays in close-by cells can contribute to cell-cell adhesion. Part of a complex containing MLC1, TRPV4, HEPACAM and ATP1B1. Phosphorylation by PKC at Ser-180 reduces conductance by 50%. Phosphorylation by PKG at Ser-111 in response to glutamate increases conductance by 40%. Post-translationally, isoform 2: Palmitoylated on its N-terminal region. Isoform 1: Not palmitoylated. As to expression, not expressed in kidney, Detectable in gastric parietal and brain astroglial cells. The absence of AQP4 in kidney may be critical for the extreme urinary concentration that occurs in this species (up to 5,000 mosmol/kg H(2)O).

It localises to the cell membrane. The protein localises to the basolateral cell membrane. Its subcellular location is the endosome membrane. The protein resides in the sarcolemma. It is found in the cell projection. It carries out the reaction H2O(in) = H2O(out). Forms a water-specific channel. Plays an important role in brain water homeostasis and in glymphatic solute transport. Required for a normal rate of water exchange across the blood brain interface. Required for normal levels of cerebrospinal fluid influx into the brain cortex and parenchyma along paravascular spaces that surround penetrating arteries, and for normal drainage of interstitial fluid along paravenous drainage pathways. Thereby, it is required for normal clearance of solutes from the brain interstitial fluid, including soluble beta-amyloid peptides derived from APP. Plays a redundant role in urinary water homeostasis and urinary concentrating ability. The sequence is that of Aquaporin-4 (AQP4) from Dipodomys merriami (Merriam's kangaroo rat).